A 216-amino-acid polypeptide reads, in one-letter code: DegV domain-containing protein UU190 (216 aa).

Residues M1–A215 enclose the DegV domain. Position 26 (S26) interacts with hexadecanoate.

In terms of biological role, may bind long-chain fatty acids, such as palmitate, and may play a role in lipid transport or fatty acid metabolism. The polypeptide is DegV domain-containing protein UU190 (Ureaplasma parvum serovar 3 (strain ATCC 700970)).